A 92-amino-acid chain; its full sequence is Putative pterin-4-alpha-carbinolamine dehydratase (92 aa).

The protein belongs to the pterin-4-alpha-carbinolamine dehydratase family.

The catalysed reaction is (4aS,6R)-4a-hydroxy-L-erythro-5,6,7,8-tetrahydrobiopterin = (6R)-L-erythro-6,7-dihydrobiopterin + H2O. The chain is Putative pterin-4-alpha-carbinolamine dehydratase from Picosynechococcus sp. (strain ATCC 27264 / PCC 7002 / PR-6) (Agmenellum quadruplicatum).